The sequence spans 432 residues: Ribosomal protein uS12 methylthiotransferase RimO (432 aa).

The region spanning 2–115 (IRVAVITLGC…LPEIINRVLK (114 aa)) is the MTTase N-terminal domain. [4Fe-4S] cluster-binding residues include C11, C47, C78, C151, C155, and C158. A Radical SAM core domain is found at 137–367 (EDGKPFAYLK…MLHQQSITRA (231 aa)).

The protein belongs to the methylthiotransferase family. RimO subfamily. It depends on [4Fe-4S] cluster as a cofactor.

The protein resides in the cytoplasm. The catalysed reaction is L-aspartate(89)-[ribosomal protein uS12]-hydrogen + (sulfur carrier)-SH + AH2 + 2 S-adenosyl-L-methionine = 3-methylsulfanyl-L-aspartate(89)-[ribosomal protein uS12]-hydrogen + (sulfur carrier)-H + 5'-deoxyadenosine + L-methionine + A + S-adenosyl-L-homocysteine + 2 H(+). Catalyzes the methylthiolation of an aspartic acid residue of ribosomal protein uS12. The sequence is that of Ribosomal protein uS12 methylthiotransferase RimO from Moorella thermoacetica (strain ATCC 39073 / JCM 9320).